The chain runs to 753 residues: 5-methyltetrahydropteroyltriglutamate--homocysteine methyltransferase (753 aa).

5-methyltetrahydropteroyltri-L-glutamate-binding positions include 17–20 (RELK) and lysine 117. Residues 431-433 (IGS) and glutamate 484 each bind L-homocysteine. L-methionine-binding positions include 431 to 433 (IGS) and glutamate 484. 5-methyltetrahydropteroyltri-L-glutamate is bound by residues 515 to 516 (RC) and tryptophan 561. L-homocysteine is bound at residue aspartate 599. Aspartate 599 contacts L-methionine. Glutamate 605 is a 5-methyltetrahydropteroyltri-L-glutamate binding site. The Zn(2+) site is built by histidine 641, cysteine 643, and glutamate 665. Histidine 694 serves as the catalytic Proton donor. Cysteine 726 contacts Zn(2+).

The protein belongs to the vitamin-B12 independent methionine synthase family. Requires Zn(2+) as cofactor.

It carries out the reaction 5-methyltetrahydropteroyltri-L-glutamate + L-homocysteine = tetrahydropteroyltri-L-glutamate + L-methionine. It functions in the pathway amino-acid biosynthesis; L-methionine biosynthesis via de novo pathway; L-methionine from L-homocysteine (MetE route): step 1/1. Its function is as follows. Catalyzes the transfer of a methyl group from 5-methyltetrahydrofolate to homocysteine resulting in methionine formation. The sequence is that of 5-methyltetrahydropteroyltriglutamate--homocysteine methyltransferase from Klebsiella pneumoniae (strain 342).